Consider the following 484-residue polypeptide: Coronin-1B (484 aa).

Ser2 is subject to Phosphoserine. WD repeat units lie at residues 80–120 (GHTG…LTSP), 130–170 (GHTK…ELYR), 174–213 (LHPDLIYNVSWNHNGSLFCTACKDKSVRIIDPRRGTLVAE), 217–260 (AHEG…EPMA), and 265–305 (DSSN…PYIH). Residues 447–481 (KLEEVMHGLRALRVLVKEQGERISRLEEHLGRMEN) adopt a coiled-coil conformation.

The protein belongs to the WD repeat coronin family. In terms of assembly, forms homooligomers, but does not form complexes with the other coronins. Interacts with Arp2/3 complex components, including ACTR2, ARPC1B and ARPC2. Binds actin. Phosphorylation on Ser-2 regulates the interaction with the Arp2/3 complex and cell motility in fibroblasts. Phosphorylation does not seem to affect subcellular location.

Its subcellular location is the cytoplasm. The protein resides in the cytoskeleton. It is found in the stress fiber. In terms of biological role, regulates leading edge dynamics and cell motility in fibroblasts. May be involved in cytokinesis and signal transduction. This chain is Coronin-1B (Coro1b), found in Rattus norvegicus (Rat).